We begin with the raw amino-acid sequence, 158 residues long: NAD(P)H-quinone oxidoreductase subunit J, chloroplastic (158 aa).

This sequence belongs to the complex I 30 kDa subunit family. As to quaternary structure, NDH is composed of at least 16 different subunits, 5 of which are encoded in the nucleus.

It is found in the plastid. The protein resides in the chloroplast thylakoid membrane. It carries out the reaction a plastoquinone + NADH + (n+1) H(+)(in) = a plastoquinol + NAD(+) + n H(+)(out). It catalyses the reaction a plastoquinone + NADPH + (n+1) H(+)(in) = a plastoquinol + NADP(+) + n H(+)(out). NDH shuttles electrons from NAD(P)H:plastoquinone, via FMN and iron-sulfur (Fe-S) centers, to quinones in the photosynthetic chain and possibly in a chloroplast respiratory chain. The immediate electron acceptor for the enzyme in this species is believed to be plastoquinone. Couples the redox reaction to proton translocation, and thus conserves the redox energy in a proton gradient. The sequence is that of NAD(P)H-quinone oxidoreductase subunit J, chloroplastic from Guizotia abyssinica (Niger).